Reading from the N-terminus, the 1040-residue chain is Multidrug resistance protein MdtB (1040 aa).

The next 12 membrane-spanning stretches (helical) occupy residues 25–45 (LLMV…PVSA), 347–367 (LMMA…NIPA), 369–389 (IIPG…MVFL), 396–416 (LTLM…IVVI), 440–460 (IGFT…PLLF), 472–492 (FAIT…TLTP), 537–557 (WLTL…WVFI), 863–883 (LGST…VLGI), 888–908 (FIHP…ALLA), 911–931 (IAGS…IGIV), 968–988 (ILMT…STGV), and 998–1018 (IGMV…TPVI).

This sequence belongs to the resistance-nodulation-cell division (RND) (TC 2.A.6) family. MdtB subfamily. As to quaternary structure, part of a tripartite efflux system composed of MdtA, MdtB and MdtC. MdtB forms a heteromultimer with MdtC.

The protein localises to the cell inner membrane. The MdtABC tripartite complex confers resistance against novobiocin and deoxycholate. In Escherichia coli O127:H6 (strain E2348/69 / EPEC), this protein is Multidrug resistance protein MdtB.